The following is a 150-amino-acid chain: uncharacterized protein (150 aa).

The protein resides in the plastid. It localises to the chloroplast. This is an uncharacterized protein from Pyropia yezoensis (Susabi-nori).